The chain runs to 201 residues: Prostamide/prostaglandin F synthase (201 aa).

Belongs to the peroxiredoxin-like PRXL2 family. Prostamide/prostaglandin F synthase subfamily.

It is found in the cytoplasm. Its subcellular location is the cytosol. The enzyme catalyses prostaglandin H2 + [thioredoxin]-dithiol = prostaglandin F2alpha + [thioredoxin]-disulfide. It catalyses the reaction prostamide F2alpha + [thioredoxin]-disulfide = prostamide H2 + [thioredoxin]-dithiol. Catalyzes the reduction of prostaglandin-ethanolamide H(2) (prostamide H(2)) to prostamide F(2alpha) with NADPH as proton donor. Also able to reduce prostaglandin H(2) to prostaglandin F(2alpha). The polypeptide is Prostamide/prostaglandin F synthase (prxl2b) (Xenopus laevis (African clawed frog)).